The chain runs to 290 residues: Ribosomal RNA small subunit methyltransferase A (290 aa).

Positions 37, 39, 64, 85, 115, and 132 each coordinate S-adenosyl-L-methionine.

Belongs to the class I-like SAM-binding methyltransferase superfamily. rRNA adenine N(6)-methyltransferase family. RsmA subfamily.

The protein resides in the cytoplasm. The catalysed reaction is adenosine(1518)/adenosine(1519) in 16S rRNA + 4 S-adenosyl-L-methionine = N(6)-dimethyladenosine(1518)/N(6)-dimethyladenosine(1519) in 16S rRNA + 4 S-adenosyl-L-homocysteine + 4 H(+). Specifically dimethylates two adjacent adenosines (A1518 and A1519) in the loop of a conserved hairpin near the 3'-end of 16S rRNA in the 30S particle. May play a critical role in biogenesis of 30S subunits. This is Ribosomal RNA small subunit methyltransferase A from Acidothermus cellulolyticus (strain ATCC 43068 / DSM 8971 / 11B).